Here is a 152-residue protein sequence, read N- to C-terminus: Large ribosomal subunit protein bL9 (152 aa).

Belongs to the bacterial ribosomal protein bL9 family.

Its function is as follows. Binds to the 23S rRNA. This chain is Large ribosomal subunit protein bL9, found in Mycobacterium marinum (strain ATCC BAA-535 / M).